The primary structure comprises 65 residues: Large ribosomal subunit protein bL35 (65 aa).

The segment at 1–28 (MPKMKTHRGAAKRFKKTGTGKIKRGQSK) is disordered.

Belongs to the bacterial ribosomal protein bL35 family.

This Acidobacterium capsulatum (strain ATCC 51196 / DSM 11244 / BCRC 80197 / JCM 7670 / NBRC 15755 / NCIMB 13165 / 161) protein is Large ribosomal subunit protein bL35.